Here is a 142-residue protein sequence, read N- to C-terminus: Large ribosomal subunit protein uL11 (142 aa).

It belongs to the universal ribosomal protein uL11 family. Part of the ribosomal stalk of the 50S ribosomal subunit. Interacts with L10 and the large rRNA to form the base of the stalk. L10 forms an elongated spine to which L12 dimers bind in a sequential fashion forming a multimeric L10(L12)X complex. Post-translationally, one or more lysine residues are methylated.

Forms part of the ribosomal stalk which helps the ribosome interact with GTP-bound translation factors. The sequence is that of Large ribosomal subunit protein uL11 from Hamiltonella defensa subsp. Acyrthosiphon pisum (strain 5AT).